A 487-amino-acid chain; its full sequence is UDP-glucose flavonoid 3-O-glucosyltransferase 7 (487 aa).

Residue His-23 is the Proton acceptor of the active site. His-23 provides a ligand contact to an anthocyanidin. Asp-121 (charge relay) is an active-site residue. The UDP-alpha-D-glucose site is built by Ala-345, Gln-347, His-362, Trp-365, Asn-366, Ser-367, and Glu-370. Gly-385 is an an anthocyanidin binding site. UDP-alpha-D-glucose contacts are provided by Glu-386 and Gln-387.

This sequence belongs to the UDP-glycosyltransferase family. As to expression, strongly expressed in achenes and receptacles.

The enzyme catalyses a flavonol + UDP-alpha-D-glucose = a flavonol 3-O-beta-D-glucoside + UDP + H(+). Broad spectrum multifunctional glucosyltransferase. Catalyzes the formation of flavonol 3-O- and 4'-O-glucosides during fruit ripening. Accepted substrates include several flavonoids, hydroxycoumarins and beta-naphthols. Uses UDP-Glc as a sugar donor, but not UDP-Gal or UDP-GlcUA. May also be involved in detoxification of xenobiotics. In Fragaria ananassa (Strawberry), this protein is UDP-glucose flavonoid 3-O-glucosyltransferase 7.